The following is a 167-amino-acid chain: Leptin (167 aa).

The first 21 residues, 1 to 21 (MCWRPLCRFLWLWSYLSYVQA), serve as a signal peptide directing secretion. Cys117 and Cys167 form a disulfide bridge.

Belongs to the leptin family.

It is found in the secreted. Functionally, key player in the regulation of energy balance and body weight control. Once released into the circulation, has central and peripheral effects by binding LEPR, found in many tissues, which results in the activation of several major signaling pathways. In the hypothalamus, acts as an appetite-regulating factor that induces a decrease in food intake and an increase in energy consumption by inducing anorexinogenic factors and suppressing orexigenic neuropeptides, also regulates bone mass and secretion of hypothalamo-pituitary-adrenal hormones. In the periphery, increases basal metabolism, influences reproductive function, regulates pancreatic beta-cell function and insulin secretion, is pro-angiogenic for endothelial cell and affects innate and adaptive immunity. In the arcuate nucleus of the hypothalamus, activates by depolarization POMC neurons inducing FOS and SOCS3 expression to release anorexigenic peptides and inhibits by hyperpolarization NPY neurons inducing SOCS3 with a consequent reduction on release of orexigenic peptides. In addition to its known satiety inducing effect, has a modulatory role in nutrient absorption. In the intestine, reduces glucose absorption by enterocytes by activating PKC and leading to a sequential activation of p38, PI3K and ERK signaling pathways which exerts an inhibitory effect on glucose absorption. Acts as a growth factor on certain tissues, through the activation of different signaling pathways increases expression of genes involved in cell cycle regulation such as CCND1, via JAK2-STAT3 pathway, or VEGFA, via MAPK1/3 and PI3K-AKT1 pathways. May also play an apoptotic role via JAK2-STAT3 pathway and up-regulation of BIRC5 expression. Pro-angiogenic, has mitogenic activity on vascular endothelial cells and plays a role in matrix remodeling by regulating the expression of matrix metalloproteinases (MMPs) and tissue inhibitors of metalloproteinases (TIMPs). In innate immunity, modulates the activity and function of neutrophils by increasing chemotaxis and the secretion of oxygen radicals. Increases phagocytosis by macrophages and enhances secretion of pro-inflammatory mediators. Increases cytotoxic ability of NK cells. Plays a pro-inflammatory role, in synergy with IL1B, by inducing NOS2 which promotes the production of IL6, IL8 and Prostaglandin E2, through a signaling pathway that involves JAK2, PI3K, MAP2K1/MEK1 and MAPK14/p38. In adaptive immunity, promotes the switch of memory T-cells towards T helper-1 cell immune responses. Increases CD4(+)CD25(-) T cells proliferation and reduces autophagy during TCR (T cell receptor) stimulation, through MTOR signaling pathway activation and BCL2 up-regulation. In Mus musculus (Mouse), this protein is Leptin (Lep).